A 72-amino-acid polypeptide reads, in one-letter code: uncharacterized protein (72 aa).

The first 19 residues, 1–19 (MKKWAVIISAVGLAFAVSG), serve as a signal peptide directing secretion. A lipid anchor (N-palmitoyl cysteine) is attached at cysteine 20. Cysteine 20 carries the S-diacylglycerol cysteine lipid modification.

To E.coli YgdI.

Its subcellular location is the cell membrane. This is an uncharacterized protein from Escherichia coli O6:H1 (strain CFT073 / ATCC 700928 / UPEC).